Reading from the N-terminus, the 333-residue chain is DNA-directed RNA polymerase subunit alpha (333 aa).

The alpha N-terminal domain (alpha-NTD) stretch occupies residues 1–234 (MQISVNEFLT…QQLAAFVDLK (234 aa)). Residues 248 to 333 (IDPILLRPVD…SLKKDDKATA (86 aa)) are alpha C-terminal domain (alpha-CTD).

It belongs to the RNA polymerase alpha chain family. Homodimer. The RNAP catalytic core consists of 2 alpha, 1 beta, 1 beta' and 1 omega subunit. When a sigma factor is associated with the core the holoenzyme is formed, which can initiate transcription.

The catalysed reaction is RNA(n) + a ribonucleoside 5'-triphosphate = RNA(n+1) + diphosphate. DNA-dependent RNA polymerase catalyzes the transcription of DNA into RNA using the four ribonucleoside triphosphates as substrates. The sequence is that of DNA-directed RNA polymerase subunit alpha from Pseudomonas syringae pv. tomato (strain ATCC BAA-871 / DC3000).